The primary structure comprises 628 residues: Probable potassium transport system protein Kup (628 aa).

12 consecutive transmembrane segments (helical) span residues 15-35, 55-75, 104-124, 142-162, 173-193, 210-230, 252-272, 281-301, 342-362, 372-392, 400-420, and 426-446; these read LAIA…LYSL, VISL…VLFV, AGLL…DAVI, PHLS…LFWI, LFGP…LWHI, TFMA…VLVL, WYVL…ALLM, PFFL…STIA, IYVP…VIAF, YGIA…VVMV, LLVA…FGAN, and EGGW…MTWY.

Belongs to the HAK/KUP transporter (TC 2.A.72) family.

The protein resides in the cell inner membrane. It carries out the reaction K(+)(in) + H(+)(in) = K(+)(out) + H(+)(out). Functionally, transport of potassium into the cell. Likely operates as a K(+):H(+) symporter. The chain is Probable potassium transport system protein Kup from Paraburkholderia xenovorans (strain LB400).